A 122-amino-acid chain; its full sequence is Small ribosomal subunit protein uS13 (122 aa).

A disordered region spans residues 93 to 122 (RRGLPVRGQRTKTNARTRKGPKKTIAGKKK).

It belongs to the universal ribosomal protein uS13 family. Part of the 30S ribosomal subunit. Forms a loose heterodimer with protein S19. Forms two bridges to the 50S subunit in the 70S ribosome.

Functionally, located at the top of the head of the 30S subunit, it contacts several helices of the 16S rRNA. In the 70S ribosome it contacts the 23S rRNA (bridge B1a) and protein L5 of the 50S subunit (bridge B1b), connecting the 2 subunits; these bridges are implicated in subunit movement. Contacts the tRNAs in the A and P-sites. This Corynebacterium efficiens (strain DSM 44549 / YS-314 / AJ 12310 / JCM 11189 / NBRC 100395) protein is Small ribosomal subunit protein uS13.